Consider the following 180-residue polypeptide: Inner membrane-spanning protein YciB (180 aa).

Transmembrane regions (helical) follow at residues 22–42, 50–70, 72–92, 121–141, and 149–169; these read IFVASGALIVATLVALAFTWL, MTLVTAAMVLVFGTLTLAFHS, LFIKWKVTVLYVLFALALLVS, LSWAIFFLVCGLLNIYVAFWL, and FKVFGLTALTLIFTLISGVYI.

The protein belongs to the YciB family.

The protein resides in the cell inner membrane. Functionally, plays a role in cell envelope biogenesis, maintenance of cell envelope integrity and membrane homeostasis. This chain is Inner membrane-spanning protein YciB, found in Yersinia pseudotuberculosis serotype O:1b (strain IP 31758).